Reading from the N-terminus, the 161-residue chain is Putative TRAP transporter small permease protein HI_1030 (161 aa).

Helical transmembrane passes span 13 to 33 (LEIL…LNVV), 51 to 71 (YLFI…NQHV), 86 to 106 (AILK…IIEG), and 135 to 155 (IAGI…IFFI).

This sequence belongs to the TRAP transporter small permease family.

It localises to the cell inner membrane. This chain is Putative TRAP transporter small permease protein HI_1030, found in Haemophilus influenzae (strain ATCC 51907 / DSM 11121 / KW20 / Rd).